The primary structure comprises 261 residues: Carboxy-terminal domain RNA polymerase II polypeptide A small phosphatase 1 (261 aa).

Residue methionine 1 is modified to N-acetylmethionine. Over residues 1–10 (MDSSAVITQI) the composition is skewed to polar residues. Positions 1 to 33 (MDSSAVITQISKEEARGPLRGKGDQKSAASQKP) are disordered. Residues 11–25 (SKEEARGPLRGKGDQ) are compositionally biased toward basic and acidic residues. The 159-residue stretch at 86–244 (QDSDKICVVI…HDLLPFFEQL (159 aa)) folds into the FCP1 homology domain. Aspartate 96 serves as the catalytic 4-aspartylphosphate intermediate. Aspartate 96, aspartate 98, and asparagine 207 together coordinate Mg(2+). Aspartate 98 acts as the Proton donor in catalysis.

In terms of assembly, monomer. Interacts with GTF2F1. Interacts with REST. Requires Mg(2+) as cofactor. Expression is restricted to non-neuronal tissues. Highest expression in skeletal muscle, spleen, lung and placenta.

The protein localises to the nucleus. The catalysed reaction is O-phospho-L-seryl-[protein] + H2O = L-seryl-[protein] + phosphate. It catalyses the reaction O-phospho-L-threonyl-[protein] + H2O = L-threonyl-[protein] + phosphate. With respect to regulation, stimulated by GTF2F1. Inhibited by beryllofluoride anions. Its function is as follows. Preferentially catalyzes the dephosphorylation of 'Ser-5' within the tandem 7 residue repeats in the C-terminal domain (CTD) of the largest RNA polymerase II subunit POLR2A. Negatively regulates RNA polymerase II transcription, possibly by controlling the transition from initiation/capping to processive transcript elongation. Recruited by REST to neuronal genes that contain RE-1 elements, leading to neuronal gene silencing in non-neuronal cells. This is Carboxy-terminal domain RNA polymerase II polypeptide A small phosphatase 1 (CTDSP1) from Homo sapiens (Human).